The primary structure comprises 284 residues: D-tagatose-1,6-bisphosphate aldolase subunit GatY (284 aa).

The active-site Proton donor is Asp-82. Positions 83 and 180 each coordinate Zn(2+). Gly-181 is a binding site for dihydroxyacetone phosphate. His-208 provides a ligand contact to Zn(2+). Dihydroxyacetone phosphate is bound by residues Gly-209 to Ser-211 and Asn-230 to Thr-233.

The protein belongs to the class II fructose-bisphosphate aldolase family. TagBP aldolase GatY subfamily. In terms of assembly, forms a complex with GatZ. It depends on Zn(2+) as a cofactor.

It catalyses the reaction D-tagatofuranose 1,6-bisphosphate = D-glyceraldehyde 3-phosphate + dihydroxyacetone phosphate. Its pathway is carbohydrate metabolism; D-tagatose 6-phosphate degradation; D-glyceraldehyde 3-phosphate and glycerone phosphate from D-tagatose 6-phosphate: step 2/2. Its function is as follows. Catalytic subunit of the tagatose-1,6-bisphosphate aldolase GatYZ, which catalyzes the reversible aldol condensation of dihydroxyacetone phosphate (DHAP or glycerone-phosphate) with glyceraldehyde 3-phosphate (G3P) to produce tagatose 1,6-bisphosphate (TBP). Requires GatZ subunit for full activity and stability. Is involved in the catabolism of galactitol. This is D-tagatose-1,6-bisphosphate aldolase subunit GatY from Salmonella typhi.